Reading from the N-terminus, the 90-residue chain is Inactive casein kinase II subunit alpha-2 (90 aa).

ATP contacts are provided by residues 40–48 (VGRGKYSEV) and Lys63.

This sequence belongs to the protein kinase superfamily. Ser/Thr protein kinase family. CK2 subfamily.

The Nipponbare allele of HD6 contains a premature stop codon, resulting in a truncated non-functional product. This chain is Inactive casein kinase II subunit alpha-2, found in Oryza sativa subsp. japonica (Rice).